Reading from the N-terminus, the 451-residue chain is Trigger factor (451 aa).

One can recognise a PPIase FKBP-type domain in the interval 165–250 (DDKLTIDFEG…LHQIQAREVL (86 aa)).

It belongs to the FKBP-type PPIase family. Tig subfamily.

Its subcellular location is the cytoplasm. It catalyses the reaction [protein]-peptidylproline (omega=180) = [protein]-peptidylproline (omega=0). Functionally, involved in protein export. Acts as a chaperone by maintaining the newly synthesized protein in an open conformation. Functions as a peptidyl-prolyl cis-trans isomerase. This is Trigger factor from Helicobacter acinonychis (strain Sheeba).